A 136-amino-acid chain; its full sequence is MNRQELITEALKARDMAYAPYSKFQVGAALLTKDGKVYRGCNIENAAYSMCNCAERTALFKAVSEGDTEFQMLAVAADTPGPVSPCGACRQVISELCTKDVIVVLTNLQGQIKEMTVEELLPGAFSSEDLHDERKL.

The CMP/dCMP-type deaminase domain maps to 1–128 (MNRQELITEA…ELLPGAFSSE (128 aa)). 42-44 (NIE) contributes to the substrate binding site. Cys-53 lines the Zn(2+) pocket. The active-site Proton donor is the Glu-55. Zn(2+)-binding residues include Cys-86 and Cys-89.

It belongs to the cytidine and deoxycytidylate deaminase family. In terms of assembly, homotetramer. Zn(2+) is required as a cofactor.

The enzyme catalyses cytidine + H2O + H(+) = uridine + NH4(+). It carries out the reaction 2'-deoxycytidine + H2O + H(+) = 2'-deoxyuridine + NH4(+). Functionally, this enzyme scavenges exogenous and endogenous cytidine and 2'-deoxycytidine for UMP synthesis. This is Cytidine deaminase (cdd) from Bacillus subtilis (strain 168).